Reading from the N-terminus, the 551-residue chain is MFS efflux transporter aclA (551 aa).

The next 8 helical transmembrane spans lie at 26-46 (WAVF…ITAI), 64-84 (VWIA…IGQI), 93-113 (PMII…GATS), 125-145 (GLGA…LVPL), 154-174 (IALS…GALV), 181-201 (WVFY…VLCL), 220-240 (WVGN…LVIG), and 251-271 (VLVP…FEAS). N-linked (GlcNAc...) asparagine glycosylation occurs at Asn-286. 6 helical membrane passes run 294–314 (VLAF…TLFF), 327–347 (VDVI…GAIM), 356–376 (LHWA…TWDA), 385–405 (ILQC…LPAI), 420–440 (AYAF…AVVF), and 492–512 (LRTV…LVVV).

The protein belongs to the major facilitator superfamily.

Its subcellular location is the membrane. In terms of biological role, MFS efflux transporter; part of the gene cluster that mediates the biosynthesis of aspirochlorine (or antibiotic A30641), an unusual halogenated spiro compound with distinctive antifungal properties due to selective inhibition of protein biosynthesis, and which is also active against bacteria, viruses, and murine tumor cells. The polypeptide is MFS efflux transporter aclA (Aspergillus oryzae (strain ATCC 42149 / RIB 40) (Yellow koji mold)).